The chain runs to 196 residues: Peroxisome assembly protein 22 (196 aa).

A helical membrane pass occupies residues 15–37 (LWIAALVAASIVTISYKVYSSYI).

The protein belongs to the peroxin-22 family.

Its subcellular location is the peroxisome membrane. Functionally, involved in peroxisome biogenesis. The polypeptide is Peroxisome assembly protein 22 (PEX22) (Debaryomyces hansenii (strain ATCC 36239 / CBS 767 / BCRC 21394 / JCM 1990 / NBRC 0083 / IGC 2968) (Yeast)).